The following is a 160-amino-acid chain: uncharacterized protein (160 aa).

This is an uncharacterized protein from Escherichia coli (strain K12).